The sequence spans 101 residues: Small ribosomal subunit protein uS14 (101 aa).

The protein belongs to the universal ribosomal protein uS14 family. As to quaternary structure, part of the 30S ribosomal subunit. Contacts proteins S3 and S10.

In terms of biological role, binds 16S rRNA, required for the assembly of 30S particles and may also be responsible for determining the conformation of the 16S rRNA at the A site. In Citrobacter koseri (strain ATCC BAA-895 / CDC 4225-83 / SGSC4696), this protein is Small ribosomal subunit protein uS14.